Here is a 102-residue protein sequence, read N- to C-terminus: ATP-dependent Clp protease adapter protein ClpS (102 aa).

Belongs to the ClpS family. As to quaternary structure, binds to the N-terminal domain of the chaperone ClpA.

In terms of biological role, involved in the modulation of the specificity of the ClpAP-mediated ATP-dependent protein degradation. The protein is ATP-dependent Clp protease adapter protein ClpS of Shewanella oneidensis (strain ATCC 700550 / JCM 31522 / CIP 106686 / LMG 19005 / NCIMB 14063 / MR-1).